The chain runs to 186 residues: GMP synthase [glutamine-hydrolyzing] subunit A (186 aa).

Residues 2–186 (SIVIINNFGQ…ENFNKICENY (185 aa)) form the Glutamine amidotransferase type-1 domain. Residue C76 is the Nucleophile of the active site. Residues H163 and E165 contribute to the active site.

Heterodimer composed of a glutamine amidotransferase subunit (A) and a GMP-binding subunit (B).

It carries out the reaction XMP + L-glutamine + ATP + H2O = GMP + L-glutamate + AMP + diphosphate + 2 H(+). It functions in the pathway purine metabolism; GMP biosynthesis; GMP from XMP (L-Gln route): step 1/1. In terms of biological role, catalyzes the synthesis of GMP from XMP. In Methanosphaera stadtmanae (strain ATCC 43021 / DSM 3091 / JCM 11832 / MCB-3), this protein is GMP synthase [glutamine-hydrolyzing] subunit A.